The primary structure comprises 286 residues: Polyamine aminopropyltransferase (286 aa).

In terms of domain architecture, PABS spans 5 to 238 (TMWHETLHDQ…GIMTFAWATD (234 aa)). Residue glutamine 33 coordinates S-methyl-5'-thioadenosine. Residues histidine 64 and aspartate 88 each contribute to the spermidine site. S-methyl-5'-thioadenosine-binding positions include glutamate 108 and 140–141 (DG). The active-site Proton acceptor is aspartate 158. 158–161 (DCTD) is a spermidine binding site. Proline 165 serves as a coordination point for S-methyl-5'-thioadenosine.

It belongs to the spermidine/spermine synthase family. As to quaternary structure, homodimer or homotetramer.

The protein localises to the cytoplasm. The catalysed reaction is S-adenosyl 3-(methylsulfanyl)propylamine + putrescine = S-methyl-5'-thioadenosine + spermidine + H(+). Its pathway is amine and polyamine biosynthesis; spermidine biosynthesis; spermidine from putrescine: step 1/1. In terms of biological role, catalyzes the irreversible transfer of a propylamine group from the amino donor S-adenosylmethioninamine (decarboxy-AdoMet) to putrescine (1,4-diaminobutane) to yield spermidine. This is Polyamine aminopropyltransferase from Salmonella enteritidis PT4 (strain P125109).